A 320-amino-acid polypeptide reads, in one-letter code: MARPKIALIGAGQIGGTLAHLAALKELGDVVLFDIAEGVPQGKALDIAESGPSEKFDADMSGTNDYADIAGADVCIVTAGVARKPGMSRDDLLGINLKVMKSVGEGIRDNAPDAFVICITNPLDAMVWALREFSGLPHHKVCGMAGVLDSARFRHFLADEFNVSMKDVTAFVLGGHGDTMVPLTRYSTVAGIPLPDLIEMGWTTQEKMDAIVQRTRDGGAEIVGLLKTGSAFYAPATSAIEMAEAYLKDQKRVLPCAAYVDGALGLKGMYVGVPTVIGAGGVERVVDINMTKDEQAMFDNSVAAVNGLVEACKAIDETLS.

NAD(+)-binding positions include 10-15 (GAGQIG) and Asp34. Positions 83 and 89 each coordinate substrate. Residues Asn96 and 119–121 (ITN) contribute to the NAD(+) site. Substrate-binding residues include Asn121 and Arg152. His176 acts as the Proton acceptor in catalysis.

Belongs to the LDH/MDH superfamily. MDH type 3 family.

The enzyme catalyses (S)-malate + NAD(+) = oxaloacetate + NADH + H(+). In terms of biological role, catalyzes the reversible oxidation of malate to oxaloacetate. The chain is Malate dehydrogenase from Jannaschia sp. (strain CCS1).